Reading from the N-terminus, the 86-residue chain is Large ribosomal subunit protein uL23 (86 aa).

The protein belongs to the universal ribosomal protein uL23 family. In terms of assembly, part of the 50S ribosomal subunit. Contacts protein L29.

In terms of biological role, binds to 23S rRNA. One of the proteins that surrounds the polypeptide exit tunnel on the outside of the ribosome. This chain is Large ribosomal subunit protein uL23, found in Pyrococcus abyssi (strain GE5 / Orsay).